The sequence spans 954 residues: Glycine dehydrogenase (decarboxylating) (954 aa).

Position 704 is an N6-(pyridoxal phosphate)lysine (Lys704).

The protein belongs to the GcvP family. The glycine cleavage system is composed of four proteins: P, T, L and H. Requires pyridoxal 5'-phosphate as cofactor.

The catalysed reaction is N(6)-[(R)-lipoyl]-L-lysyl-[glycine-cleavage complex H protein] + glycine + H(+) = N(6)-[(R)-S(8)-aminomethyldihydrolipoyl]-L-lysyl-[glycine-cleavage complex H protein] + CO2. Functionally, the glycine cleavage system catalyzes the degradation of glycine. The P protein binds the alpha-amino group of glycine through its pyridoxal phosphate cofactor; CO(2) is released and the remaining methylamine moiety is then transferred to the lipoamide cofactor of the H protein. This chain is Glycine dehydrogenase (decarboxylating), found in Rhizobium etli (strain ATCC 51251 / DSM 11541 / JCM 21823 / NBRC 15573 / CFN 42).